The primary structure comprises 619 residues: DNA mismatch repair protein MutL (619 aa).

It belongs to the DNA mismatch repair MutL/HexB family.

Its function is as follows. This protein is involved in the repair of mismatches in DNA. It is required for dam-dependent methyl-directed DNA mismatch repair. May act as a 'molecular matchmaker', a protein that promotes the formation of a stable complex between two or more DNA-binding proteins in an ATP-dependent manner without itself being part of a final effector complex. The sequence is that of DNA mismatch repair protein MutL from Shewanella frigidimarina (strain NCIMB 400).